A 414-amino-acid polypeptide reads, in one-letter code: Phospholipid-transporting ATPase accessory subunit LEM3 (414 aa).

Residues 1 to 50 form a required for localization to the plasma membrane region; that stretch reads MVNFDLGQVGEVFRRKDKGAIVSGDNPEEEEDVDASEFEEDEVKPVRTKN. At 1 to 74 the chain is on the cytoplasmic side; it reads MVNFDLGQVG…AINPVLTPRT (74 aa). The segment at 20 to 52 is disordered; sequence AIVSGDNPEEEEDVDASEFEEDEVKPVRTKNRR. Residues 26–42 show a composition bias toward acidic residues; it reads NPEEEEDVDASEFEEDE. Phosphoserine is present on S36. Residues 75–95 traverse the membrane as a helical segment; that stretch reads VLPLYLLIAVVFVIVGGCILA. Over 96–372 the chain is Extracellular; the sequence is QNSKVDEVTI…HGSHLGGRNP (277 aa). 2 disulfide bridges follow: C110/C159 and C216/C231. Residue N113 is glycosylated (N-linked (GlcNAc...) asparagine). Residues N240, N256, N279, N298, and N332 are each glycosylated (N-linked (GlcNAc...) asparagine). A helical membrane pass occupies residues 373–393; the sequence is FLGIVYLIGGCICAAMALILL. Residues 394–414 are Cytoplasmic-facing; the sequence is TFWLFGGRKIADASSLSWNMK. A required for localization to the plasma membrane region spans residues 400–414; that stretch reads GRKIADASSLSWNMK.

Belongs to the CDC50/LEM3 family. As to quaternary structure, component of a flippase complex consisting of DNF1 or DNF2 and LEM3. Interacts with DNF1; the interaction is direct and required for their mutual export from the endoplasmic reticulum. Interacts with DNF2; the interaction is direct and required for their mutual export from the endoplasmic reticulum.

The protein localises to the cell membrane. Its function is as follows. Accessory component of a P4-ATPase flippase complex which catalyzes the hydrolysis of ATP coupled to the transport of glucosylceramide, phosphatidylcholine, phosphatidylethanolamine, and small amounts of phosphatidylserine from the lumenal to the cytosolic leaflet of the cell membrane and ensures the maintenance of asymmetric distribution of phospholipids. Contributes to substrate binding and specificity of the P4-ATPase catalytic subunit. This chain is Phospholipid-transporting ATPase accessory subunit LEM3, found in Saccharomyces cerevisiae (strain ATCC 204508 / S288c) (Baker's yeast).